The sequence spans 88 residues: UPF0223 protein BH2638 (88 aa).

It belongs to the UPF0223 family.

The sequence is that of UPF0223 protein BH2638 from Halalkalibacterium halodurans (strain ATCC BAA-125 / DSM 18197 / FERM 7344 / JCM 9153 / C-125) (Bacillus halodurans).